A 336-amino-acid chain; its full sequence is 3-isopropylmalate dehydrogenase (336 aa).

Positions 87, 97, 121, and 211 each coordinate substrate. Mg(2+) contacts are provided by Asp-211, Asp-235, and Asp-239. Position 271–283 (271–283) interacts with NAD(+); sequence GSAPDIAGQGIAD.

The protein belongs to the isocitrate and isopropylmalate dehydrogenases family. LeuB type 2 subfamily. Homodimer. Mg(2+) serves as cofactor. The cofactor is Mn(2+).

The protein localises to the cytoplasm. The catalysed reaction is (2R,3S)-3-isopropylmalate + NAD(+) = 4-methyl-2-oxopentanoate + CO2 + NADH. Its pathway is amino-acid biosynthesis; L-leucine biosynthesis; L-leucine from 3-methyl-2-oxobutanoate: step 3/4. Its function is as follows. Catalyzes the oxidation of 3-carboxy-2-hydroxy-4-methylpentanoate (3-isopropylmalate) to 3-carboxy-4-methyl-2-oxopentanoate. The product decarboxylates to 4-methyl-2 oxopentanoate. The protein is 3-isopropylmalate dehydrogenase of Mycolicibacterium gilvum (strain PYR-GCK) (Mycobacterium gilvum (strain PYR-GCK)).